The sequence spans 160 residues: Transcription elongation factor GreA (160 aa).

Positions 53–73 (AREEQGMVEARIRDIEGRLQN) form a coiled coil.

The protein belongs to the GreA/GreB family.

Necessary for efficient RNA polymerase transcription elongation past template-encoded arresting sites. The arresting sites in DNA have the property of trapping a certain fraction of elongating RNA polymerases that pass through, resulting in locked ternary complexes. Cleavage of the nascent transcript by cleavage factors such as GreA or GreB allows the resumption of elongation from the new 3'terminus. GreA releases sequences of 2 to 3 nucleotides. This Pseudomonas putida (strain ATCC 47054 / DSM 6125 / CFBP 8728 / NCIMB 11950 / KT2440) protein is Transcription elongation factor GreA.